We begin with the raw amino-acid sequence, 102 residues long: Putative septation protein SpoVG 1 (102 aa).

The protein belongs to the SpoVG family.

Could be involved in septation. The protein is Putative septation protein SpoVG 1 of Listeria monocytogenes serotype 4b (strain F2365).